Consider the following 125-residue polypeptide: Large ribosomal subunit protein bL21 (125 aa).

Basic residues predominate over residues 75-89 (FKKRRRQNSKRKRGH). Disordered stretches follow at residues 75–94 (FKKR…QDLT) and 103–125 (AGGA…APEA). A compositionally biased stretch (low complexity) spans 106-125 (ASPAAAAASSETPAASAPEA).

It belongs to the bacterial ribosomal protein bL21 family. In terms of assembly, part of the 50S ribosomal subunit. Contacts protein L20.

Functionally, this protein binds to 23S rRNA in the presence of protein L20. The polypeptide is Large ribosomal subunit protein bL21 (Methylocella silvestris (strain DSM 15510 / CIP 108128 / LMG 27833 / NCIMB 13906 / BL2)).